Consider the following 178-residue polypeptide: Crossover junction endodeoxyribonuclease RuvC (178 aa).

Catalysis depends on residues Asp8, Glu72, and Asp144. Mg(2+) contacts are provided by Asp8, Glu72, and Asp144.

The protein belongs to the RuvC family. Homodimer which binds Holliday junction (HJ) DNA. The HJ becomes 2-fold symmetrical on binding to RuvC with unstacked arms; it has a different conformation from HJ DNA in complex with RuvA. In the full resolvosome a probable DNA-RuvA(4)-RuvB(12)-RuvC(2) complex forms which resolves the HJ. Mg(2+) is required as a cofactor.

It localises to the cytoplasm. The catalysed reaction is Endonucleolytic cleavage at a junction such as a reciprocal single-stranded crossover between two homologous DNA duplexes (Holliday junction).. In terms of biological role, the RuvA-RuvB-RuvC complex processes Holliday junction (HJ) DNA during genetic recombination and DNA repair. Endonuclease that resolves HJ intermediates. Cleaves cruciform DNA by making single-stranded nicks across the HJ at symmetrical positions within the homologous arms, yielding a 5'-phosphate and a 3'-hydroxyl group; requires a central core of homology in the junction. The consensus cleavage sequence is 5'-(A/T)TT(C/G)-3'. Cleavage occurs on the 3'-side of the TT dinucleotide at the point of strand exchange. HJ branch migration catalyzed by RuvA-RuvB allows RuvC to scan DNA until it finds its consensus sequence, where it cleaves and resolves the cruciform DNA. This Idiomarina loihiensis (strain ATCC BAA-735 / DSM 15497 / L2-TR) protein is Crossover junction endodeoxyribonuclease RuvC.